Here is an 865-residue protein sequence, read N- to C-terminus: Leucine-rich repeat-containing protein 66 (865 aa).

The chain crosses the membrane as a helical span at residues 4 to 24 (FYARVTVMVTGLCFVGTVTNP). Residue asparagine 42 is glycosylated (N-linked (GlcNAc...) asparagine). 5 LRR repeats span residues 138–160 (RLKV…WKLK), 161–182 (PLCS…GFHG), 185–206 (QLKS…AFKG), 209–230 (KLQV…VTIA), and 235–255 (NLEL…ANFQ). Asparagine 248 carries N-linked (GlcNAc...) asparagine glycosylation. The chain crosses the membrane as a helical span at residues 366 to 386 (ALAVCLSVFITFVVAFCLGAF). Disordered regions lie at residues 463-522 (RMLG…PGQH) and 654-749 (DTPS…AESV). The span at 470-479 (MDPSSQQSPG) shows a compositional bias: polar residues. Over residues 675-688 (AVQRDASFDPHDDL) the composition is skewed to basic and acidic residues. The segment covering 702-713 (FTLSSEGSQDTR) has biased composition (polar residues). 2 positions are modified to phosphoserine: serine 714 and serine 748. The 32-residue stretch at 728–759 (SQPLPSRNLGEYKDSVTSAESVEDITSQQTLE) folds into the LRRNT domain. The N-linked (GlcNAc...) asparagine glycan is linked to asparagine 787. Residues 840–865 (FPNIDSSPSPPCSDQDPSDPEEHDTK) form a disordered region. Residues 855 to 865 (DPSDPEEHDTK) show a composition bias toward acidic residues.

Its subcellular location is the membrane. This Rattus norvegicus (Rat) protein is Leucine-rich repeat-containing protein 66 (Lrrc66).